A 265-amino-acid chain; its full sequence is Sulfur carrier protein FdhD (265 aa).

Cys107 functions as the Cysteine persulfide intermediate in the catalytic mechanism.

It belongs to the FdhD family.

It localises to the cytoplasm. Required for formate dehydrogenase (FDH) activity. Acts as a sulfur carrier protein that transfers sulfur from IscS to the molybdenum cofactor prior to its insertion into FDH. The chain is Sulfur carrier protein FdhD from Staphylococcus aureus (strain bovine RF122 / ET3-1).